A 1132-amino-acid chain; its full sequence is Sentrin-specific protease 6 (1132 aa).

Disordered regions lie at residues 23–51 (SKRDGGFKNNWSFDHEEESEGDADKDGAN) and 327–388 (LPGG…VPST). 5 positions are modified to phosphoserine: S41, S355, S356, S371, and S373. T436 bears the Phosphothreonine mark. Residue K648 forms a Glycyl lysine isopeptide (Lys-Gly) (interchain with G-Cter in SUMO2) linkage. Residues 686–1132 (ISVTNEDLHC…QYASASGGSE (447 aa)) form a protease region. Active-site residues include H785 and D936. Phosphoserine is present on S938. C1049 is a catalytic residue. A Phosphoserine modification is found at S1131.

It belongs to the peptidase C48 family. Interacts with RXRA. Forms a complex with KAT5-TIP60 and UBE2I in response to UV irradiation. Interacts with RPA1 to maintain it in hyposumoylated state during S phase preventing DNA repair initiation.

The protein resides in the nucleus. The protein operates within protein modification; protein sumoylation. Its function is as follows. Protease that deconjugates SUMO1, SUMO2 and SUMO3 from targeted proteins. Processes preferentially poly-SUMO2 and poly-SUMO3 chains, but does not efficiently process SUMO1, SUMO2 and SUMO3 precursors. Deconjugates SUMO1 from RXRA, leading to transcriptional activation. Involved in chromosome alignment and spindle assembly, by regulating the kinetochore CENPH-CENPI-CENPK complex. Desumoylates PML and CENPI, protecting them from degradation by the ubiquitin ligase RNF4, which targets polysumoylated proteins for proteasomal degradation. Also desumoylates RPA1, thus preventing recruitment of RAD51 to the DNA damage foci to initiate DNA repair through homologous recombination. The chain is Sentrin-specific protease 6 (Senp6) from Mus musculus (Mouse).